The chain runs to 72 residues: Translation initiation factor IF-1 (72 aa).

Residues 1–72 (MSKEEAIEVE…SRGRITYRAK (72 aa)) enclose the S1-like domain.

Belongs to the IF-1 family. As to quaternary structure, component of the 30S ribosomal translation pre-initiation complex which assembles on the 30S ribosome in the order IF-2 and IF-3, IF-1 and N-formylmethionyl-tRNA(fMet); mRNA recruitment can occur at any time during PIC assembly.

The protein localises to the cytoplasm. Its function is as follows. One of the essential components for the initiation of protein synthesis. Stabilizes the binding of IF-2 and IF-3 on the 30S subunit to which N-formylmethionyl-tRNA(fMet) subsequently binds. Helps modulate mRNA selection, yielding the 30S pre-initiation complex (PIC). Upon addition of the 50S ribosomal subunit IF-1, IF-2 and IF-3 are released leaving the mature 70S translation initiation complex. This Geobacter metallireducens (strain ATCC 53774 / DSM 7210 / GS-15) protein is Translation initiation factor IF-1.